Here is a 623-residue protein sequence, read N- to C-terminus: MNALKRLGTTLAKNGDQIIEGTKELDQISVKYFLGNTRVSNNEKSLVSISSNKSRLNFNQLIKDNAHLIGKGSQYQRKVVKHYLSPLIGHKLRRQDIHNDYNKQLSHTDHIITPTDRKREAFSSMELAVDILPLLIKSTKKPVTKPAKRRLFKPYYTKEVPPIPDFKGDMKLFEDYIALLTHTKFLYKNSSSSNGIIPKILRVLIHPSNLNTIDLRSVQCYNDILYFYSKKYDFATCRELFAQMKVEGCKPNTTTYNILLLNLVKKVHMRKIRSIKNELLFYLRNMQKNGIFCDTVTWNTCYNFLNDEMSRDLYIEKLIDCGVPLTSELVYSVVRNSSKAHISTKTKYILDMFGEDGESFVNLKFVNLLISDLVLDHNVERAWSVLRYFELKQLKFVNQPKFLINSETMNTFLRYFAEQGRIDLCFLTYNYFVKDLVGPNKIRPNVNTFDMLMKSLVKNGYTETLPTVFEVICALSERYGIKIRNDGYWSLKCKAIIKFQYKSSSCEKNKTELLNKLNNFSWGKQLPLFTTKVWKNGNSEVRKICRMLGSIPIPLRKSRKLGDKETVDRSQNRSVSEKKKAYRNRIKYIAIGNAMARRIPYANNWHQSFKDEVTKRGLLASER.

5 PPR repeats span residues 217 to 251, 252 to 292, 362 to 396, 405 to 439, and 445 to 479; these read SVQCYNDILYFYSKKYDFATCRELFAQMKVEGCKP, NTTT…NGIF, NLKFVNLLISDLVLDHNVERAWSVLRYFELKQLKF, NSETMNTFLRYFAEQGRIDLCFLTYNYFVKDLVGP, and NVNTFDMLMKSLVKNGYTETLPTVFEVICALSERY.

It is found in the mitochondrion inner membrane. Functionally, required for respiration. The chain is ATPase expression protein 3 (AEP3) from Candida glabrata (strain ATCC 2001 / BCRC 20586 / JCM 3761 / NBRC 0622 / NRRL Y-65 / CBS 138) (Yeast).